The sequence spans 309 residues: Tagatose-6-phosphate kinase (309 aa).

It belongs to the carbohydrate kinase PfkB family. LacC subfamily.

It carries out the reaction D-tagatofuranose 6-phosphate + ATP = D-tagatofuranose 1,6-bisphosphate + ADP + H(+). Its pathway is carbohydrate metabolism; D-tagatose 6-phosphate degradation; D-glyceraldehyde 3-phosphate and glycerone phosphate from D-tagatose 6-phosphate: step 1/2. The sequence is that of Tagatose-6-phosphate kinase from Streptococcus pneumoniae serotype 4 (strain ATCC BAA-334 / TIGR4).